Consider the following 334-residue polypeptide: MYELKTLLPQFDIKLPTCMYPLKNVSLAADSLASGSSTSASTSASTSSCKLEANRIDRTGRNAATCALDLDSLGRQIQRLLKDDTASVAARQEKVLKQLEELKAQLGQIRAGLGVCGKTFQHTTAFQNGGLKEVPLQDVVINGHPNFIPYALLALKNAWRNLYTIDVKTFTHSTMADIGPAAREFEANLAKVPVNPALPKISVTLIWKNCEHTEMISSPTMYVPIYGEVNIIRYLGRVGPAEYRYEGSPLCNEIDLVLDICYQLLRCNTHKTQVAMVRLLDKRLQKQQYFGGSQMSVADVGVYSSLIRMPAVTEKDLTPALVAWRKRAKLVVQI.

Positions 280–327 (LDKRLQKQQYFGGSQMSVADVGVYSSLIRMPAVTEKDLTPALVAWRKR) constitute a GST C-terminal domain.

As to quaternary structure, component of the aminoacyl-tRNA synthase complex which is comprised of a bifunctional glutamyl-prolyl-tRNA synthase, the monospecific isoleucyl, leucyl, glutaminyl, methionyl, lysyl, arginyl and aspartyl-tRNA synthases, and three auxiliary proteins.

It localises to the cytoplasm. The protein localises to the cytosol. It is found in the nucleus. In terms of biological role, required for assembly and stability of the aminoacyl-tRNA synthase complex. The chain is Probable aminoacyl tRNA synthase complex-interacting multifunctional protein 2 from Drosophila melanogaster (Fruit fly).